The chain runs to 1434 residues: MDQELMDFFDFSKEFVRKQAPRGHVSSNVHAFVTESDELEKPIKREIVGKDYVKSFVEKEKKRMNGIFSSDEMASRRNKSLDDMDSDEEYEASPEIRTDAEFYEKYYFNLNRDKSLPIYAKREEIINAINENPVVIVKGETGCGKTTQVPPILFWMMVSKAKQYCNIVVTQPRRIAAISIANRVCQERQWQPGTVCGYQVGLHRQLERFADTRLLYCTTGVLLNILVNNKTLTHYTHIVLDEVHERGQEMDFLLIVIRRLLATNSRHVKVILMSATINPRELSDYFANESSAPPVIAASYGRNFTVEKYYRDQLQSINWEGHQEDINSPGITQEGYRSAIKTILVIDNMERNERGTGKSYNQSLREGSILIFLPGVGEINNMSDMLKDMANHDPIMKFNMVRCHSLMTSEDQREIFQPSPPGYRKIIMATNVAESSITVPDVSYIIDFCLEKVLVTDTSTNFSSLRLAWASKTNCRQRAGRVGRLRNGRVYRMVTKSFYQRELSEYSVPEMLRSPLQNCVLKAKELKMGTPVEMLALALSPPNLSDICNTILMLKEVGALFPTMDGTYDPRDGDITYWGTIMSKLPLDTHLSRLIILGYVFNLVDEAIIIAAGLTVRGIYIDSARLGADNYWMHYVFADGSGSDLVGIWRVYLTYLNMCENGLQKDASIQWAKRFHLSLRALSEMHLLVQDLRLRCEKLSLLPLNFPTHRISDDREKAIMLKVIIAGSFYPNYFVQSKSTSGDDRNMFSVISGLDPCRTVYFTSFTDRTMGELYTRKVKQLFPEAQIPPENMDVTFGQGSEKIFVTFKNDIYKPEGTTYVHVPGRIKAEVYKALRLRTYCNQHSLRVMEPMNALKYVKDKKIGKIVEGRWIPPSKPVAVELLALPSLFDKIIIGRITNIVSCGKFFFQPESFENCIANMSEHFNNPQQLQNCVRNAGAITKGLMLLAKRQGKYQRATVVRVDTQDSRNVRFYVRFVDYGDIERLPMAQLRLMSQDLLRHYRDLPPRLFECRLALVQPASMVSTYNAWPQKADDMLHALAKGGRVQLEIYSLVQNVAAVMIHLREGNLNELLVKEKLARRTDEDYMSRVDHDFRMRKQECRGYVSQQERQQVNEEYLRSKQLPQDMDLSPPPPEECNSLITLKGPFSTLESRVFSTMRSGMSKTVRIDPCSVNFVLLDTEPQDQHAKMVVAASISAAGRHNDVLTLRSTSIMPNIPGFAAIMTLIFCPRAQLKANTANSRYVSILAGIGYHPQTMQSYYEDHDLVINLDVNIDEHDVLLINQIRYMIDSAFFNLEGELHPTAGHADRVLIHNTIYPALNRLLSKNRNFIECNPNSSDYVWQDMEESGEPDPQPYGRRSIFPMHTIPELHEEKMDTVLDLIANCKEMYDYRNFEGSFDPMTCSLCKQYLESVAELRLHLLTQLHLDREKEVGYPID.

The Helicase ATP-binding domain occupies 126 to 295; that stretch reads INAINENPVV…FANESSAPPV (170 aa). Residue 139–146 participates in ATP binding; sequence GETGCGKT. A DEAH box motif is present at residues 241 to 244; it reads DEVH. One can recognise a Helicase C-terminal domain in the interval 356-527; it reads TGKSYNQSLR…NCVLKAKELK (172 aa). The Tudor domain maps to 936 to 999; that stretch reads AGAITKGLML…RLMSQDLLRH (64 aa).

It belongs to the DEAD box helicase family. DEAH subfamily.

Its subcellular location is the cytoplasm. It catalyses the reaction ATP + H2O = ADP + phosphate + H(+). Functionally, probable ATP-binding RNA helicase which plays a central role during spermatogenesis and oogenesis by repressing transposable elements and preventing their mobilization, which is essential for the germline integrity. Acts via the piRNA metabolic process, which mediates the repression of transposable elements during meiosis by forming complexes composed of piRNAs and Piwi and govern the methylation and subsequent repression of transposons. Involved in the repression of LTR retrotransposon copia. Also involved in telomere regulation by repressing specialized telomeric retroelements HeT-A, TAHRE, and TART; Drosophila telomeres being maintained by transposition of specialized telomeric retroelements. Involved in telomeric trans-silencing, a repression mechanism by which a transposon or a transgene inserted in subtelomeric heterochromatin has the capacity to repress in trans in the female germline, a homologous transposon, or transgene located in euchromatin. Involved in the repression of testis-expressed Stellate genes by the homologous Su(Ste) repeats. Required for anteroposterior and dorsoventral axis formation during oogenesis. The polypeptide is Probable ATP-dependent RNA helicase spindle-E (spn-E) (Drosophila persimilis (Fruit fly)).